Reading from the N-terminus, the 98-residue chain is Protein FAM24A (98 aa).

A signal peptide spans 1–29 (MFDLRTKVMIGIASTLLIAAIVLITVVFC).

It belongs to the FAM24 family.

It is found in the secreted. In Rattus norvegicus (Rat), this protein is Protein FAM24A (Fam24a).